The chain runs to 155 residues: MPDSTIPLLCVLGLLALSSACYIQNCPRGGKRSFPDLKRPCMSCGPGNRGLCFGPSICCGEGMGCYMGSPEAASCVEENYLTSPCEVGGRVCGSEEGHCAAPGVCCDAESCLLDSDCLDDSKRQPPSEQYSSLMEGLAGDLLQWMLHATRRERPQ.

An N-terminal signal peptide occupies residues 1-20 (MPDSTIPLLCVLGLLALSSA). C21 and C26 are joined by a disulfide. G29 bears the Glycine amide mark. 7 cysteine pairs are disulfide-bonded: C41–C85, C44–C58, C52–C75, C59–C65, C92–C105, C99–C117, and C106–C111.

The protein belongs to the vasopressin/oxytocin family. Seven disulfide bonds are present in neurophysin.

Its subcellular location is the secreted. Functionally, vasotocin is probably an antidiuretic hormone. This chain is Vasotocin-neurophysin VT 1, found in Oncorhynchus masou (Cherry salmon).